Consider the following 236-residue polypeptide: Ubiquinone biosynthesis O-methyltransferase (236 aa).

S-adenosyl-L-methionine-binding residues include Arg-40, Gly-59, Asp-80, and Leu-124.

This sequence belongs to the methyltransferase superfamily. UbiG/COQ3 family.

It carries out the reaction a 3-demethylubiquinol + S-adenosyl-L-methionine = a ubiquinol + S-adenosyl-L-homocysteine + H(+). It catalyses the reaction a 3-(all-trans-polyprenyl)benzene-1,2-diol + S-adenosyl-L-methionine = a 2-methoxy-6-(all-trans-polyprenyl)phenol + S-adenosyl-L-homocysteine + H(+). It participates in cofactor biosynthesis; ubiquinone biosynthesis. Its function is as follows. O-methyltransferase that catalyzes the 2 O-methylation steps in the ubiquinone biosynthetic pathway. The polypeptide is Ubiquinone biosynthesis O-methyltransferase (Saccharophagus degradans (strain 2-40 / ATCC 43961 / DSM 17024)).